The chain runs to 693 residues: Guanyl-specific ribonuclease pgl-3 (693 aa).

The segment at 205–447 (KKLMIEGPKI…VNRIIESLEK (243 aa)) is involved in dimerization. Catalysis depends on His-437, which acts as the Proton acceptor. 3 disordered regions span residues 445–468 (LEKS…GPTT), 523–591 (AEKN…DATP), and 620–693 (SSNG…RGGS). Over residues 447–468 (KSSSSEPSATAKQTTTSNGPTT) the composition is skewed to low complexity. Polar residues-rich tracts occupy residues 528 to 548 (NTPS…SPTK) and 569 to 580 (ITKVSPQPQERT). Residues 581–614 (GTAWGSGDATPVPLATPVNEYKVSGFGAAPVASG) are required for interaction with sepa-1. Composition is skewed to gly residues over residues 625–634 (SGRGSYGGGR), 641–660 (RGAY…SRGY), and 668–693 (RGSY…RGGS). Residues 633-693 (GRGGDRGGRG…GFFGGSRGGS (61 aa)) form an RNA-binding RGG-box region.

In terms of assembly, may form a homodimer. Interacts with pgl-1 and pgl-2; this association is not required for P-granule localization of either pgl-1 or pgl-2. Interacts with sepa-1; the interaction is enhanced in the presence of RNA. Interacts with prmt-1; the interaction is direct. In terms of processing, methylated at arginine residues in the RNA-binding RGG-box by prmt-1. Methylation promotes P-granule degradation by autophagy. In terms of tissue distribution, highly expressed in the germline. Expressed in most somatic cells.

The protein resides in the cytoplasmic granule. It carries out the reaction [RNA] containing guanosine + H2O = an [RNA fragment]-3'-guanosine-3'-phosphate + a 5'-hydroxy-ribonucleotide-3'-[RNA fragment].. Its function is as follows. Guanyl-specific endoribonuclease which cleaves the phosphodiester bond in single-stranded RNA between the 3'-guanylic residue and the 5'-OH residue of adjacent nucleotide, resulting in the formation of a corresponding 2',3'-cyclic phosphate intermediate. P-granule component involved in germline development. Together with the P-granule component pgl-1, is involved in the formation of P-granules. Together with pgl-1, probably recruits other granule components such as pos-1, mex-3 and glh-1, and RNA to P-granules. In vitro, binds mRNA; this interaction is required for the formation of liquid-like droplets that resemble P-granules. Most likely recruits pgl-1 into P-granules during autophagy. Associates with adapters such as sepa-1 and is required for the accumulation and degradation of P-granules by autophagy in somatic cells. This ensures exclusive localization of the P-granules in germ cells. In addition, may act redundantly with pgl-1 to protect germ cells from excessive germline apoptosis during normal oogenesis and development of the two gonadal arms. This may in part be through regulating the localization of sir-2.1 which is involved in germ cell apoptosis. May protect somatic cells from excessive apoptosis during normal development. The chain is Guanyl-specific ribonuclease pgl-3 from Caenorhabditis elegans.